The sequence spans 321 residues: Reticulon-2 (321 aa).

Disordered stretches follow at residues 1–36 (MGHV…SPVT) and 65–85 (PPVR…PREE). The Reticulon domain occupies 134–321 (VKDLLYWRDI…TVKKPPAKQK (188 aa)). 2 helical membrane-spanning segments follow: residues 163 to 183 (FSVI…TLTL) and 250 to 270 (FLVI…ITVL).

The protein resides in the endoplasmic reticulum membrane. It localises to the sarcoplasmic reticulum membrane. It is found in the cell membrane. The protein localises to the sarcolemma. Its subcellular location is the T-tubule. The protein resides in the cytoplasm. It localises to the myofibril. It is found in the sarcomere. The protein localises to the z line. Its subcellular location is the cytoskeleton. Its function is as follows. Inhibits amyloid precursor protein processing, probably by blocking BACE1 activity. Enhances trafficking of the glutamate transporter SLC1A1/EAAC1 from the endoplasmic reticulum to the cell surface. Plays a role in the translocation of SLC2A4/GLUT4 from intracellular membranes to the cell membrane which facilitates the uptake of glucose into the cell. The sequence is that of Reticulon-2 from Xenopus tropicalis (Western clawed frog).